The sequence spans 126 residues: Small ribosomal subunit protein uS11 (126 aa).

The protein belongs to the universal ribosomal protein uS11 family. In terms of assembly, part of the 30S ribosomal subunit. Interacts with proteins S7 and S18. Binds to IF-3.

Located on the platform of the 30S subunit, it bridges several disparate RNA helices of the 16S rRNA. Forms part of the Shine-Dalgarno cleft in the 70S ribosome. This chain is Small ribosomal subunit protein uS11, found in Ehrlichia chaffeensis (strain ATCC CRL-10679 / Arkansas).